The chain runs to 64 residues: Purotoxin-2 (64 aa).

The knottin domain stretch occupies residues Ala1–Cys44. 4 cysteine pairs are disulfide-bonded: Cys4/Cys19, Cys11/Cys28, Cys18/Cys44, and Cys30/Cys42. The tract at residues Gln45–Leu64 is linear cationic cytotoxin domain. Leu64 is modified (leucine amide).

This sequence belongs to the neurotoxin 19 (CSTX) family. 05 (U4-Lctx) subfamily. Post-translationally, amidation at Leu-64 is not mandatory for activity on P2RX3. As to expression, expressed by the venom gland.

It is found in the secreted. Its function is as follows. Enhances the high-affinity desensitization of human P2RX3 purinoceptors. At 50 nM, the toxin decreases the IC(50) for ambient ATP from 2.67 nM to 0.77 nM in human P2RX3. The sequence is that of Purotoxin-2 from Alopecosa marikovskyi (Wolf spider).